A 743-amino-acid chain; its full sequence is Alpha-N-acetylglucosaminidase (743 aa).

An N-terminal signal peptide occupies residues Met-1 to Gly-23. N-linked (GlcNAc...) asparagine glycosylation is found at Asn-261, Asn-272, Asn-435, Asn-503, Asn-526, and Asn-532.

The protein belongs to the glycosyl hydrolase 89 family. Monomer and homodimer. Liver, ovary, peripheral blood leukocytes, testis, prostate, spleen, colon, lung, placenta and kidney.

The protein resides in the lysosome. It carries out the reaction Hydrolysis of terminal non-reducing N-acetyl-D-glucosamine residues in N-acetyl-alpha-D-glucosaminides.. In terms of biological role, involved in the degradation of heparan sulfate. This chain is Alpha-N-acetylglucosaminidase (NAGLU), found in Homo sapiens (Human).